The following is a 135-amino-acid chain: Mu-like prophage FluMu protein gp46 (135 aa).

To phage Mu protein gp46.

This Haemophilus influenzae (strain ATCC 51907 / DSM 11121 / KW20 / Rd) protein is Mu-like prophage FluMu protein gp46.